Reading from the N-terminus, the 508-residue chain is Glucose-1-phosphate adenylyltransferase small subunit 1, chloroplastic (508 aa).

The interval 1–27 (MSSIVTSGVINVPRSSSSSKNLSFSSS) is disordered. The transit peptide at 1 to 59 (MSSIVTSGVINVPRSSSSSKNLSFSSSSQLSGNKILTVSGNGAPRGRCTLKHVFLTPKA) directs the protein to the chloroplast. Residues 15-27 (SSSSSKNLSFSSS) show a composition bias toward low complexity.

This sequence belongs to the bacterial/plant glucose-1-phosphate adenylyltransferase family. Heterotetramer. Seeds.

Its subcellular location is the plastid. It localises to the chloroplast. The enzyme catalyses alpha-D-glucose 1-phosphate + ATP + H(+) = ADP-alpha-D-glucose + diphosphate. It participates in glycan biosynthesis; starch biosynthesis. Activated by 3'phosphoglycerate, inhibited by orthophosphate. Allosteric regulation. In terms of biological role, this protein plays a role in synthesis of starch. It catalyzes the synthesis of the activated glycosyl donor, ADP-glucose from Glc-1-P and ATP. In Vicia faba (Broad bean), this protein is Glucose-1-phosphate adenylyltransferase small subunit 1, chloroplastic (AGPC).